The primary structure comprises 926 residues: Ubiquitin carboxyl-terminal hydrolase 4 (926 aa).

In terms of domain architecture, Rhodanese spans 205 to 328 (SQMEILLIDI…WLKSNYGRQV (124 aa)). Phosphoserine is present on serine 443. The USP domain occupies 562 to 923 (VGLENLGNSC…NAYVLFYHRV (362 aa)). The active-site Nucleophile is cysteine 571. Histidine 880 functions as the Proton acceptor in the catalytic mechanism.

It belongs to the peptidase C19 family. As to quaternary structure, interacts with BRO1, RFU1 and VPS32. Associates with the 26S proteasome.

It localises to the cytoplasm. The protein resides in the late endosome membrane. It carries out the reaction Thiol-dependent hydrolysis of ester, thioester, amide, peptide and isopeptide bonds formed by the C-terminal Gly of ubiquitin (a 76-residue protein attached to proteins as an intracellular targeting signal).. With respect to regulation, RFU1 is an inhibitor of deubiquitination activity. Functionally, ubiquitin thioesterase that acts at the late endosome/prevacuolar compartment to recover ubiquitin from ubiquitinated membrane proteins en route to the vacuole. Also removes ubiquitin from soluble proteins targeted to proteasomes. Is essential to maintain a normal level of free ubiquitin. Involved in the ammonium-induced down-regulation of the GAP1 permease and the UME3 destruction in response to oxidative stress. Has a role in the RAD9 checkpoint response to TOP1 poisons. Required for promoting coordination of DNA replication and avoids DNA overreplication. In Saccharomyces cerevisiae (strain ATCC 204508 / S288c) (Baker's yeast), this protein is Ubiquitin carboxyl-terminal hydrolase 4 (DOA4).